The primary structure comprises 430 residues: DNA damage-inducible protein DIN7 (430 aa).

An N-domain region spans residues 1-96; it reads MGIPGLLPQL…HTETRRRKKR (96 aa). Mg(2+)-binding residues include aspartate 30, aspartate 78, glutamate 150, aspartate 152, aspartate 171, aspartate 173, and aspartate 227. Positions 114-247 are I-domain; that stretch reads NAMEYFQKSV…VTAMKIVKRY (134 aa).

The protein belongs to the XPG/RAD2 endonuclease family. The cofactor is Mg(2+).

It localises to the nucleus. Functionally, 5'-&gt;3' double-stranded DNA exonuclease. In Saccharomyces cerevisiae (strain ATCC 204508 / S288c) (Baker's yeast), this protein is DNA damage-inducible protein DIN7 (DIN7).